The chain runs to 37 residues: uncharacterized protein (37 aa).

Residues 13–33 traverse the membrane as a helical segment; the sequence is TFLTIIVLLMIVFGIAIVALL.

It is found in the host membrane. This is an uncharacterized protein from Acidianus convivator (ABV).